Consider the following 160-residue polypeptide: Eukaryotic translation initiation factor 5A-3 (160 aa).

The span at 1–12 (MSDEEHHFESKA) shows a compositional bias: basic and acidic residues. Positions 1–21 (MSDEEHHFESKADAGASKTYP) are disordered. The residue at position 52 (Lys52) is a Hypusine.

It belongs to the eIF-5A family. In terms of processing, lys-52 undergoes hypusination, a unique post-translational modification that consists in the addition of a butylamino group from spermidine to lysine side chain, leading to the formation of the unusual amino acid hypusine. eIF-5As are the only known proteins to undergo this modification, which is essential for their function.

Translation factor that promotes translation elongation and termination, particularly upon ribosome stalling at specific amino acid sequence contexts. Binds between the exit (E) and peptidyl (P) site of the ribosome and promotes rescue of stalled ribosome: specifically required for efficient translation of polyproline-containing peptides as well as other motifs that stall the ribosome. Acts as a ribosome quality control (RQC) cofactor by joining the RQC complex to facilitate peptidyl transfer during CAT tailing step. In Solanum tuberosum (Potato), this protein is Eukaryotic translation initiation factor 5A-3 (EIF5A3).